Consider the following 138-residue polypeptide: MRHSYRGRRFNRTAEHRKAMFANMSAALIKHEQIVTTLPKAKDLRPVVEKLISLGRTDSIHARRLAMAQIRDADMVKKLFTVLGPRYQSRPGGYCRIMKAGFRYGDNAPMAVIEFVDRDVDARGKDSGPTAVETADAA.

It belongs to the bacterial ribosomal protein bL17 family. As to quaternary structure, part of the 50S ribosomal subunit. Contacts protein L32.

This is Large ribosomal subunit protein bL17 from Methylorubrum populi (strain ATCC BAA-705 / NCIMB 13946 / BJ001) (Methylobacterium populi).